Reading from the N-terminus, the 192-residue chain is Cytidylate kinase (192 aa).

Residue 7–15 (GPPGAGKST) coordinates ATP.

Belongs to the cytidylate kinase family. Type 2 subfamily.

The protein localises to the cytoplasm. The enzyme catalyses CMP + ATP = CDP + ADP. The catalysed reaction is dCMP + ATP = dCDP + ADP. This is Cytidylate kinase from Haloquadratum walsbyi (strain DSM 16790 / HBSQ001).